Consider the following 93-residue polypeptide: Large ribosomal subunit protein uL23 (93 aa).

Belongs to the universal ribosomal protein uL23 family. Part of the 50S ribosomal subunit. Contacts protein L29, and trigger factor when it is bound to the ribosome.

One of the early assembly proteins it binds 23S rRNA. One of the proteins that surrounds the polypeptide exit tunnel on the outside of the ribosome. Forms the main docking site for trigger factor binding to the ribosome. This chain is Large ribosomal subunit protein uL23, found in Nautilia profundicola (strain ATCC BAA-1463 / DSM 18972 / AmH).